An 89-amino-acid polypeptide reads, in one-letter code: FMRFamide-like neuropeptides 19 (89 aa).

Positions 1–20 are cleaved as a signal peptide; it reads MSFQLTLFSMLFLLIAVVVG. The propeptide occupies 21 to 67; the sequence is QPIQSQNGDLKMQAVQDNSPLNMEAFNDDSALYDYLEQSDPSLKSME. A Phenylalanine amide modification is found at F76. Positions 80-89 are excised as a propeptide; sequence ASWASSVRFG.

Belongs to the FARP (FMRFamide related peptide) family. Each flp gene is expressed in a distinct set of neurons. Flp-19 is expressed in the URX interneurons, the serotonin and acetylcholine-expressing HSN neurons, and the AIN, AWA and BAG neurons.

It localises to the secreted. In terms of biological role, FMRFamides and FMRFamide-like peptides are neuropeptides. WANQVRF-amide inhibits the activity of dissected pharyngeal myogenic muscle system. This Caenorhabditis elegans protein is FMRFamide-like neuropeptides 19.